We begin with the raw amino-acid sequence, 369 residues long: Transmembrane protein adipocyte-associated 1 (369 aa).

A glycan (N-linked (GlcNAc...) asparagine) is linked at N20. The next 7 helical transmembrane spans lie at 45 to 65 (LLLL…LPLA), 73 to 93 (SSPI…VGIA), 120 to 140 (FFLL…GHLE), 148 to 168 (VLAI…TLEI), 189 to 209 (QFWL…VILP), 237 to 257 (LLQG…LCCV), and 262 to 282 (FLYF…GFFG). N329 carries N-linked (GlcNAc...) asparagine glycosylation.

Belongs to the UPF0359 family. In terms of tissue distribution, ubiquitous, with higher levels in heart, brain, lung, liver and kidney.

It localises to the membrane. This chain is Transmembrane protein adipocyte-associated 1 (Tpra1), found in Mus musculus (Mouse).